Here is a 221-residue protein sequence, read N- to C-terminus: Urease accessory protein UreF (221 aa).

Belongs to the UreF family. UreD, UreF and UreG form a complex that acts as a GTP-hydrolysis-dependent molecular chaperone, activating the urease apoprotein by helping to assemble the nickel containing metallocenter of UreC. The UreE protein probably delivers the nickel.

The protein resides in the cytoplasm. Required for maturation of urease via the functional incorporation of the urease nickel metallocenter. This chain is Urease accessory protein UreF, found in Vibrio parahaemolyticus.